The sequence spans 105 residues: Iron-sulfur cluster assembly protein CyaY (105 aa).

Belongs to the frataxin family.

Functionally, involved in iron-sulfur (Fe-S) cluster assembly. May act as a regulator of Fe-S biogenesis. In Dechloromonas aromatica (strain RCB), this protein is Iron-sulfur cluster assembly protein CyaY.